The primary structure comprises 156 residues: MYYAIFESPIGPILLAGDEEGLKYVNFMKGKKKIEVPDSWVENEEFFREASRQLEAYFAGELKSFDVKLAPEGTEFQKSVWNALKEIPYGETRTYGEIAKNIGNPKASRAVGLANNRNPIAIIVPCHRVIGANGKLTGYASGLDIKEFLLKLEGSC.

Cysteine 126 (nucleophile; methyl group acceptor) is an active-site residue.

Belongs to the MGMT family.

The protein resides in the cytoplasm. The catalysed reaction is a 6-O-methyl-2'-deoxyguanosine in DNA + L-cysteinyl-[protein] = S-methyl-L-cysteinyl-[protein] + a 2'-deoxyguanosine in DNA. The enzyme catalyses a 4-O-methyl-thymidine in DNA + L-cysteinyl-[protein] = a thymidine in DNA + S-methyl-L-cysteinyl-[protein]. In terms of biological role, involved in the cellular defense against the biological effects of O6-methylguanine (O6-MeG) and O4-methylthymine (O4-MeT) in DNA. Repairs the methylated nucleobase in DNA by stoichiometrically transferring the methyl group to a cysteine residue in the enzyme. This is a suicide reaction: the enzyme is irreversibly inactivated. This chain is Methylated-DNA--protein-cysteine methyltransferase, found in Methanosarcina acetivorans (strain ATCC 35395 / DSM 2834 / JCM 12185 / C2A).